Consider the following 224-residue polypeptide: Cytidylate kinase (224 aa).

12–20 provides a ligand contact to ATP; the sequence is GPAGAGKST.

The protein belongs to the cytidylate kinase family. Type 1 subfamily.

Its subcellular location is the cytoplasm. It carries out the reaction CMP + ATP = CDP + ADP. The enzyme catalyses dCMP + ATP = dCDP + ADP. This is Cytidylate kinase from Caldanaerobacter subterraneus subsp. tengcongensis (strain DSM 15242 / JCM 11007 / NBRC 100824 / MB4) (Thermoanaerobacter tengcongensis).